The chain runs to 556 residues: Formate--tetrahydrofolate ligase 1 (556 aa).

65 to 72 (TPAGEGKS) is a binding site for ATP.

This sequence belongs to the formate--tetrahydrofolate ligase family.

It catalyses the reaction (6S)-5,6,7,8-tetrahydrofolate + formate + ATP = (6R)-10-formyltetrahydrofolate + ADP + phosphate. It functions in the pathway one-carbon metabolism; tetrahydrofolate interconversion. This chain is Formate--tetrahydrofolate ligase 1, found in Streptococcus pyogenes serotype M2 (strain MGAS10270).